Here is a 476-residue protein sequence, read N- to C-terminus: Methylenetetrahydrofolate--tRNA-(uracil-5-)-methyltransferase TrmFO (476 aa).

14–19 serves as a coordination point for FAD; it reads GGGLAG. Residues 428 to 447 are disordered; it reads LTEPPTHGADGKKLRGPEKS. Positions 436-447 are enriched in basic and acidic residues; the sequence is ADGKKLRGPEKS.

The protein belongs to the MnmG family. TrmFO subfamily. The cofactor is FAD.

The protein resides in the cytoplasm. It catalyses the reaction uridine(54) in tRNA + (6R)-5,10-methylene-5,6,7,8-tetrahydrofolate + NADH + H(+) = 5-methyluridine(54) in tRNA + (6S)-5,6,7,8-tetrahydrofolate + NAD(+). The enzyme catalyses uridine(54) in tRNA + (6R)-5,10-methylene-5,6,7,8-tetrahydrofolate + NADPH + H(+) = 5-methyluridine(54) in tRNA + (6S)-5,6,7,8-tetrahydrofolate + NADP(+). Its function is as follows. Catalyzes the folate-dependent formation of 5-methyl-uridine at position 54 (M-5-U54) in all tRNAs. This Rhodopseudomonas palustris (strain BisA53) protein is Methylenetetrahydrofolate--tRNA-(uracil-5-)-methyltransferase TrmFO.